The following is a 551-amino-acid chain: Cytochrome P450 monooxygenase sdnQ (551 aa).

Positions 1–23 (MDDPSIASGFQQGTGRTTGANGT) are disordered. Over residues 8–23 (SGFQQGTGRTTGANGT) the composition is skewed to polar residues. Asn-21 carries an N-linked (GlcNAc...) asparagine glycan. A helical transmembrane segment spans residues 41 to 57 (CIGTSLLVALLTTIIIY). Cys-491 is a heme binding site.

It belongs to the cytochrome P450 family. Heme is required as a cofactor.

Its subcellular location is the membrane. Its pathway is antibiotic biosynthesis. Cytochrome P450 monooxygenase; part of the gene cluster that mediates the biosynthesis of sordarin and hypoxysordarin, glycoside antibiotics with a unique tetracyclic diterpene aglycone structure. First, the geranylgeranyl diphosphate synthase sdnC constructs GGDP from farnesyl diphosphate and isopentenyl diphosphate. The diterpene cyclase sdnA then catalyzes the cyclization of GGDP to afford cycloaraneosene. Cycloaraneosene is then hydroxylated four times by the putative cytochrome P450 monooxygenases sdnB, sdnE, sdnF and sdnH to give a hydroxylated cycloaraneosene derivative such as cycloaraneosene-8,9,13,19-tetraol. Although the order of the hydroxylations is unclear, at least C8, C9 and C13 of the cycloaraneosene skeleton are hydroxylated before the sordaricin formation. Dehydration of the 13-hydroxy group of the hydroxylated cycloaraneosene derivative might be catalyzed by an unassigned hypothetical protein such as sdnG and sdnP to construct the cyclopentadiene moiety. The FAD-dependent oxidoreductase sdnN is proposed to catalyze the oxidation at C9 of the hydroxylated cycloaraneosene derivative and also catalyze the Baeyer-Villiger oxidation to give the lactone intermediate. The presumed lactone intermediate would be hydrolyzed to give an acrolein moiety and a carboxylate moiety. Then, [4+2]cycloaddition would occur between the acrolein moiety and the cyclopentadiene moiety to give sordaricin. SdnN might also be involved in the [4+2]cycloaddition after the hypothesized oxidation to accommodate the oxidized product and prompt the [4+2]cycloaddition. GDP-6-deoxy-D-altrose may be biosynthesized from GDP-D-mannose by the putative GDP-mannose-4,6-dehydratase sdnI and the short-chain dehydrogenase sdnK. The glycosyltransferase sdnJ catalyzes the attachment of 6-deoxy-D-altrose onto the 19-hydroxy group of sordaricin to give 4'-O-demethylsordarin. The methyltransferase sdnD would complete the biosynthesis of sordarin. Sordarin can be further modified into hypoxysordarin. The unique acyl chain at the 3'-hydroxy group of hypoxysordarin would be constructed by an iterative type I PKS sdnO and the trans-acting polyketide methyltransferase sdnL. SdnL would be responsible for the introduction of an alpha-methyl group of the polyketide chain. Alternatively, the beta-lactamase-like protein sdnR might be responsible for the cleavage and transfer of the polyketide chain from the PKS sdnO to sordarin. Two putative cytochrome P450 monooxygenases, sdnQ and sdnT, might catalyze the epoxidations of the polyketide chain to complete the biosynthesis of hypoxysordarin. Transcriptional regulators sdnM and sdnS are presumably encoded for the transcriptional regulation of the expression of the sdn gene cluster. The polypeptide is Cytochrome P450 monooxygenase sdnQ (Sordaria araneosa (Pleurage araneosa)).